The following is a 257-amino-acid chain: Aspartate/glutamate leucyltransferase (257 aa).

Belongs to the R-transferase family. Bpt subfamily.

Its subcellular location is the cytoplasm. The catalysed reaction is N-terminal L-glutamyl-[protein] + L-leucyl-tRNA(Leu) = N-terminal L-leucyl-L-glutamyl-[protein] + tRNA(Leu) + H(+). The enzyme catalyses N-terminal L-aspartyl-[protein] + L-leucyl-tRNA(Leu) = N-terminal L-leucyl-L-aspartyl-[protein] + tRNA(Leu) + H(+). Its function is as follows. Functions in the N-end rule pathway of protein degradation where it conjugates Leu from its aminoacyl-tRNA to the N-termini of proteins containing an N-terminal aspartate or glutamate. The protein is Aspartate/glutamate leucyltransferase of Nitrobacter hamburgensis (strain DSM 10229 / NCIMB 13809 / X14).